The sequence spans 1355 residues: DNA-directed RNA polymerase subunit beta' (1355 aa).

Zn(2+) is bound by residues Cys219, Cys293, Cys300, and Cys303. Residues 1331 to 1355 (AEVEVDDEVDDDYEDDDEDDDDYED) are disordered.

The protein belongs to the RNA polymerase beta' chain family. RpoC2 subfamily. As to quaternary structure, in cyanobacteria the RNAP catalytic core is composed of 2 alpha, 1 beta, 1 beta', 1 gamma and 1 omega subunit. When a sigma factor is associated with the core the holoenzyme is formed, which can initiate transcription. Requires Zn(2+) as cofactor.

It catalyses the reaction RNA(n) + a ribonucleoside 5'-triphosphate = RNA(n+1) + diphosphate. Functionally, DNA-dependent RNA polymerase catalyzes the transcription of DNA into RNA using the four ribonucleoside triphosphates as substrates. The sequence is that of DNA-directed RNA polymerase subunit beta' from Trichormus variabilis (strain ATCC 29413 / PCC 7937) (Anabaena variabilis).